The following is a 187-amino-acid chain: Elongation factor P (187 aa).

The protein belongs to the elongation factor P family.

It localises to the cytoplasm. Its pathway is protein biosynthesis; polypeptide chain elongation. Its function is as follows. Involved in peptide bond synthesis. Stimulates efficient translation and peptide-bond synthesis on native or reconstituted 70S ribosomes in vitro. Probably functions indirectly by altering the affinity of the ribosome for aminoacyl-tRNA, thus increasing their reactivity as acceptors for peptidyl transferase. The protein is Elongation factor P (efp) of Synechocystis sp. (strain ATCC 27184 / PCC 6803 / Kazusa).